Here is a 434-residue protein sequence, read N- to C-terminus: Putative polysaccharide biosynthesis protein with aminopeptidase-like domain (434 aa).

Aminopeptidase-like stretches follow at residues Met-1–Val-55 and Ser-57–Asn-355. Residues Lys-56–Gly-164 are insert. The Zn(2+) site is built by His-189, Asp-195, and His-324. Residues Arg-356 to Val-434 are permutated winged helix-turn-helix.

The protein belongs to the UPF0770 family. As to quaternary structure, homotrimer. It depends on Zn(2+) as a cofactor.

Its function is as follows. The genomic context suggests a role in the biosynthesis of modified polysaccharides; this association with genes involved in carbohydrate metabolism is observed in several phylogenetically distinct taxa. Is not expected to have peptidase activity despite low similarity to aminopeptidases. This is Putative polysaccharide biosynthesis protein with aminopeptidase-like domain from Clostridium acetobutylicum (strain ATCC 824 / DSM 792 / JCM 1419 / IAM 19013 / LMG 5710 / NBRC 13948 / NRRL B-527 / VKM B-1787 / 2291 / W).